A 63-amino-acid polypeptide reads, in one-letter code: MKFYNIFVFVALILAITIGQSEAGWLKKIGKKIERVGQHTRDATIQGLGVAQQAANVAATARG.

Positions 1 to 23 (MKFYNIFVFVALILAITIGQSEA) are cleaved as a signal peptide. Arginine 62 bears the Arginine amide mark.

The protein belongs to the cecropin family.

It is found in the secreted. Cecropins have lytic and antibacterial activity against several Gram-positive and Gram-negative bacteria. The polypeptide is Cecropin-A1 (CecA1) (Drosophila mauritiana (Fruit fly)).